Consider the following 1394-residue polypeptide: DNA-directed RNA polymerase subunit beta'' (1394 aa).

The Zn(2+) site is built by C224, C295, C302, and C305.

This sequence belongs to the RNA polymerase beta' chain family. RpoC2 subfamily. As to quaternary structure, in plastids the minimal PEP RNA polymerase catalytic core is composed of four subunits: alpha, beta, beta', and beta''. When a (nuclear-encoded) sigma factor is associated with the core the holoenzyme is formed, which can initiate transcription. The cofactor is Zn(2+).

The protein localises to the plastid. Its subcellular location is the chloroplast. It catalyses the reaction RNA(n) + a ribonucleoside 5'-triphosphate = RNA(n+1) + diphosphate. In terms of biological role, DNA-dependent RNA polymerase catalyzes the transcription of DNA into RNA using the four ribonucleoside triphosphates as substrates. This chain is DNA-directed RNA polymerase subunit beta'', found in Vitis vinifera (Grape).